Reading from the N-terminus, the 265-residue chain is Dehydrin COR47 (265 aa).

Residues 1–14 (MAEEYKNNVPEHET) are compositionally biased toward basic and acidic residues. The disordered stretch occupies residues 1-265 (MAEEYKNNVP…EVKKEKESDD (265 aa)). N-acetylalanine is present on A2. Residues 16–28 (TVATEESPATTTE) show a composition bias toward polar residues. Residues 29 to 47 (VTDRGLFDFLGKKEEEVKP) show a composition bias toward basic and acidic residues. S64 is modified (phosphoserine). The segment covering 69–79 (AAEHEEVKENK) has biased composition (basic and acidic residues). T90 is modified (phosphothreonine). Composition is skewed to basic and acidic residues over residues 96-105 (NKPSVIEKLH) and 129-156 (IVEG…KTAE). Residues 133–153 (EEDKKGLVEKIKEKLPGHHDK) form repeat 1. Residues 133-251 (EEDKKGLVEK…KEKLPGYHAK (119 aa)) form a 3 X 21 AA repeats, Lys-rich region. Low complexity predominate over residues 160–172 (PVSTTIPVPVSES). Basic and acidic residues-rich tracts occupy residues 173-204 (VVEH…KAED) and 227-265 (PVEH…ESDD). 2 tandem repeats follow at residues 180–200 (EEEK…HHDE) and 231–251 (PEEK…YHAK).

Belongs to the plant dehydrin family.

In Arabidopsis thaliana (Mouse-ear cress), this protein is Dehydrin COR47 (COR47).